A 220-amino-acid polypeptide reads, in one-letter code: 7-cyano-7-deazaguanine synthase (220 aa).

11–21 contributes to the ATP binding site; the sequence is VSGGMDSVTLM. Zn(2+) is bound by residues Cys186, Cys194, Cys197, and Cys200.

It belongs to the QueC family. Requires Zn(2+) as cofactor.

The enzyme catalyses 7-carboxy-7-deazaguanine + NH4(+) + ATP = 7-cyano-7-deazaguanine + ADP + phosphate + H2O + H(+). Its pathway is purine metabolism; 7-cyano-7-deazaguanine biosynthesis. Functionally, catalyzes the ATP-dependent conversion of 7-carboxy-7-deazaguanine (CDG) to 7-cyano-7-deazaguanine (preQ(0)). The polypeptide is 7-cyano-7-deazaguanine synthase (Porphyromonas gingivalis (strain ATCC 33277 / DSM 20709 / CIP 103683 / JCM 12257 / NCTC 11834 / 2561)).